The chain runs to 341 residues: Heat-inducible transcription repressor HrcA (341 aa).

The protein belongs to the HrcA family.

Functionally, negative regulator of class I heat shock genes (grpE-dnaK-dnaJ and groELS operons). Prevents heat-shock induction of these operons. The polypeptide is Heat-inducible transcription repressor HrcA (Mycobacteroides abscessus (strain ATCC 19977 / DSM 44196 / CCUG 20993 / CIP 104536 / JCM 13569 / NCTC 13031 / TMC 1543 / L948) (Mycobacterium abscessus)).